A 489-amino-acid polypeptide reads, in one-letter code: UDP-N-acetylmuramate--L-alanine ligase (489 aa).

130-136 lines the ATP pocket; that stretch reads GTHGKTS.

It belongs to the MurCDEF family.

It localises to the cytoplasm. It catalyses the reaction UDP-N-acetyl-alpha-D-muramate + L-alanine + ATP = UDP-N-acetyl-alpha-D-muramoyl-L-alanine + ADP + phosphate + H(+). Its pathway is cell wall biogenesis; peptidoglycan biosynthesis. Its function is as follows. Cell wall formation. This chain is UDP-N-acetylmuramate--L-alanine ligase, found in Corynebacterium efficiens (strain DSM 44549 / YS-314 / AJ 12310 / JCM 11189 / NBRC 100395).